We begin with the raw amino-acid sequence, 115 residues long: Holo-[acyl-carrier-protein] synthase (115 aa).

Residues Asp-6 and Glu-51 each coordinate Mg(2+).

It belongs to the P-Pant transferase superfamily. AcpS family. Mg(2+) serves as cofactor.

The protein resides in the cytoplasm. The catalysed reaction is apo-[ACP] + CoA = holo-[ACP] + adenosine 3',5'-bisphosphate + H(+). Its function is as follows. Transfers the 4'-phosphopantetheine moiety from coenzyme A to a Ser of acyl-carrier-protein. This is Holo-[acyl-carrier-protein] synthase from Campylobacter jejuni subsp. jejuni serotype O:2 (strain ATCC 700819 / NCTC 11168).